The primary structure comprises 509 residues: 3-ketoacyl-CoA synthase 11 (509 aa).

2 helical membrane passes run 36–56 and 75–95; these read LITH…AAQI and LISV…YFMT. The 290-residue stretch at 92-381 folds into the FAE domain; the sequence is YFMTRPRPVY…FFATLVGRKL (290 aa). Active-site residues include Cys236, His315, His399, His403, and Asn436.

It belongs to the thiolase-like superfamily. Chalcone/stilbene synthases family. In terms of tissue distribution, only expressed in guard cells. Expressed in siliques, flowers, leaves, stems, roots and seedlings.

The protein localises to the membrane. It catalyses the reaction a very-long-chain acyl-CoA + malonyl-CoA + H(+) = a very-long-chain 3-oxoacyl-CoA + CO2 + CoA. The protein operates within lipid metabolism; fatty acid biosynthesis. In terms of biological role, active on both saturated and mono-unsaturated acyl chains C16 to C20. This chain is 3-ketoacyl-CoA synthase 11, found in Arabidopsis thaliana (Mouse-ear cress).